The following is a 535-amino-acid chain: CTP synthase (535 aa).

An amidoligase domain region spans residues 1 to 267 (MTKYIFVTGG…DQIVCDHLKL (267 aa)). S13 contacts CTP. S13 is a UTP binding site. 14–19 (SLGKGI) is a binding site for ATP. Y54 serves as a coordination point for L-glutamine. D71 contributes to the ATP binding site. The Mg(2+) site is built by D71 and E141. CTP contacts are provided by residues 148 to 150 (DIE), 188 to 193 (KTKPTQ), and K224. Residues 188-193 (KTKPTQ) and K224 each bind UTP. 240-242 (RDA) contributes to the ATP binding site. The Glutamine amidotransferase type-1 domain maps to 292–534 (KIALVGKYVE…VKASITNKES (243 aa)). G354 is an L-glutamine binding site. C381 functions as the Nucleophile; for glutamine hydrolysis in the catalytic mechanism. Residues 382–385 (LGMQ), E405, and R462 each bind L-glutamine. Active-site residues include H507 and E509.

This sequence belongs to the CTP synthase family. In terms of assembly, homotetramer.

It carries out the reaction UTP + L-glutamine + ATP + H2O = CTP + L-glutamate + ADP + phosphate + 2 H(+). The enzyme catalyses L-glutamine + H2O = L-glutamate + NH4(+). It catalyses the reaction UTP + NH4(+) + ATP = CTP + ADP + phosphate + 2 H(+). It functions in the pathway pyrimidine metabolism; CTP biosynthesis via de novo pathway; CTP from UDP: step 2/2. Allosterically activated by GTP, when glutamine is the substrate; GTP has no effect on the reaction when ammonia is the substrate. The allosteric effector GTP functions by stabilizing the protein conformation that binds the tetrahedral intermediate(s) formed during glutamine hydrolysis. Inhibited by the product CTP, via allosteric rather than competitive inhibition. Catalyzes the ATP-dependent amination of UTP to CTP with either L-glutamine or ammonia as the source of nitrogen. Regulates intracellular CTP levels through interactions with the four ribonucleotide triphosphates. The chain is CTP synthase from Bacillus thuringiensis subsp. konkukian (strain 97-27).